A 128-amino-acid polypeptide reads, in one-letter code: Lymphocyte antigen 6D (128 aa).

An N-terminal signal peptide occupies residues 1–20 (MKTVLLFLVALAAAAGPAQA). A UPAR/Ly6 domain is found at 21 to 108 (LRCHVCTSSS…WQSAAPARTS (88 aa)). Cystine bridges form between cysteine 23-cysteine 45, cysteine 26-cysteine 32, cysteine 38-cysteine 63, cysteine 67-cysteine 86, and cysteine 87-cysteine 92. Serine 98 carries the GPI-anchor amidated serine lipid modification. The propeptide at 99-128 (WQSAAPARTSAHLGLALACGLLALLWAPGL) is removed in mature form.

It is found in the cell membrane. In terms of biological role, may act as a specification marker at earliest stage specification of lymphocytes between B- and T-cell development. Marks the earliest stage of B-cell specification. This chain is Lymphocyte antigen 6D (LY6D), found in Bos taurus (Bovine).